The chain runs to 450 residues: Tubulin beta chain (450 aa).

Glu69, Ser138, Gly142, Thr143, Gly144, Asn204, and Asn226 together coordinate GTP. Residue Glu69 coordinates Mg(2+). Residues 427–450 (DATIDQEFEDEEEVEEQNDDSDEQ) form a disordered region. Positions 430–450 (IDQEFEDEEEVEEQNDDSDEQ) are enriched in acidic residues.

Belongs to the tubulin family. In terms of assembly, dimer of alpha and beta chains. A typical microtubule is a hollow water-filled tube with an outer diameter of 25 nm and an inner diameter of 15 nM. Alpha-beta heterodimers associate head-to-tail to form protofilaments running lengthwise along the microtubule wall with the beta-tubulin subunit facing the microtubule plus end conferring a structural polarity. Microtubules usually have 13 protofilaments but different protofilament numbers can be found in some organisms and specialized cells. It depends on Mg(2+) as a cofactor.

The protein resides in the cytoplasm. The protein localises to the cytoskeleton. Functionally, tubulin is the major constituent of microtubules, a cylinder consisting of laterally associated linear protofilaments composed of alpha- and beta-tubulin heterodimers. Microtubules grow by the addition of GTP-tubulin dimers to the microtubule end, where a stabilizing cap forms. Below the cap, tubulin dimers are in GDP-bound state, owing to GTPase activity of alpha-tubulin. The chain is Tubulin beta chain from Bombyx mori (Silk moth).